A 637-amino-acid polypeptide reads, in one-letter code: 1-deoxy-D-xylulose-5-phosphate synthase (637 aa).

Thiamine diphosphate-binding positions include His82 and 123-125; that span reads GHA. Asp154 contacts Mg(2+). Residues 155–156, Asn183, Tyr295, and Glu378 contribute to the thiamine diphosphate site; that span reads GS. Position 183 (Asn183) interacts with Mg(2+).

Belongs to the transketolase family. DXPS subfamily. Homodimer. Mg(2+) serves as cofactor. The cofactor is thiamine diphosphate.

It carries out the reaction D-glyceraldehyde 3-phosphate + pyruvate + H(+) = 1-deoxy-D-xylulose 5-phosphate + CO2. The protein operates within metabolic intermediate biosynthesis; 1-deoxy-D-xylulose 5-phosphate biosynthesis; 1-deoxy-D-xylulose 5-phosphate from D-glyceraldehyde 3-phosphate and pyruvate: step 1/1. Its function is as follows. Catalyzes the acyloin condensation reaction between C atoms 2 and 3 of pyruvate and glyceraldehyde 3-phosphate to yield 1-deoxy-D-xylulose-5-phosphate (DXP). This is 1-deoxy-D-xylulose-5-phosphate synthase from Lawsonia intracellularis (strain PHE/MN1-00).